Here is a 279-residue protein sequence, read N- to C-terminus: NADPH-dependent 7-cyano-7-deazaguanine reductase (279 aa).

Substrate is bound at residue 86–88 (IES). An NADPH-binding site is contributed by 88-89 (SK). Cysteine 187 functions as the Thioimide intermediate in the catalytic mechanism. Residue aspartate 194 is the Proton donor of the active site. 226–227 (HE) contributes to the substrate binding site. 255-256 (RG) serves as a coordination point for NADPH.

Belongs to the GTP cyclohydrolase I family. QueF type 2 subfamily. As to quaternary structure, homodimer.

The protein localises to the cytoplasm. It catalyses the reaction 7-aminomethyl-7-carbaguanine + 2 NADP(+) = 7-cyano-7-deazaguanine + 2 NADPH + 3 H(+). Its pathway is tRNA modification; tRNA-queuosine biosynthesis. Catalyzes the NADPH-dependent reduction of 7-cyano-7-deazaguanine (preQ0) to 7-aminomethyl-7-deazaguanine (preQ1). The protein is NADPH-dependent 7-cyano-7-deazaguanine reductase of Glaesserella parasuis serovar 5 (strain SH0165) (Haemophilus parasuis).